A 183-amino-acid chain; its full sequence is uncharacterized protein (183 aa).

The interval 54 to 89 (DAASQSDPLPGGDGLTGGDSKATRRTSPRYYPPSEA) is disordered.

This is an uncharacterized protein from Human cytomegalovirus (strain AD169) (HHV-5).